A 523-amino-acid polypeptide reads, in one-letter code: Probable methylmalonate-semialdehyde/malonate-semialdehyde dehydrogenase [acylating], mitochondrial (523 aa).

The N-terminal 22 residues, 1-22, are a transit peptide targeting the mitochondrion; the sequence is MLSRLARVQPKCQQLAHFSTSK. Phe-175, Lys-199, and Glu-202 together coordinate NAD(+). The Nucleophile role is filled by Cys-307. Glu-407 is an NAD(+) binding site.

This sequence belongs to the aldehyde dehydrogenase family. Homodimer.

It is found in the mitochondrion. It catalyses the reaction 2-methyl-3-oxopropanoate + NAD(+) + CoA + H2O = propanoyl-CoA + hydrogencarbonate + NADH + H(+). The enzyme catalyses 3-oxopropanoate + NAD(+) + CoA + H2O = hydrogencarbonate + acetyl-CoA + NADH + H(+). Its function is as follows. Probable malonate and methylmalonate semialdehyde dehydrogenase involved in the catabolism of valine, thymine, and compounds catabolized by way of beta-alanine, including uracil and cytidine. In Caenorhabditis elegans, this protein is Probable methylmalonate-semialdehyde/malonate-semialdehyde dehydrogenase [acylating], mitochondrial (alh-8).